The primary structure comprises 65 residues: SCOCO-like protein 1 (65 aa).

A coiled-coil region spans residues 8–44 (RSLMEQKAMELQQQLQALLDEIDQNKQESENISRESE).

Belongs to the SLO1 family.

The sequence is that of SCOCO-like protein 1 from Schizosaccharomyces pombe (strain 972 / ATCC 24843) (Fission yeast).